The sequence spans 67 residues: Tachystatin-A2 (67 aa).

An N-terminal signal peptide occupies residues 1-23; sequence MKLQNTLILIGCLFLMGAMIGDA. 3 disulfides stabilise this stretch: Cys27-Cys47, Cys34-Cys52, and Cys46-Cys64.

Granular hemocytes, small secretory granules.

It localises to the secreted. Exhibits stronger antimicrobial activity against the Gram-positive bacteria (S.aureus (IC(50)=4.2 ug/ml)) and fungi (C.albicans (IC(50)=3.0 ug/ml) and P.pastoris (IC(50)=0.5 ug/ml)) than Gram-negative bacteria (E.coli (IC(50)=25 ug/ml)). Binds to chitin (8.4 uM are required to obtain 50% of binding). Does not cause hemolysis on sheep erythrocytes. Has no blocking activity on the P-type calcium channel. Has also been shown to weakly inhibit Kv1.2/KCNA2 voltage-gated potassium channels and TRPV1 receptors. In Tachypleus tridentatus (Japanese horseshoe crab), this protein is Tachystatin-A2.